The sequence spans 146 residues: Anti-sigma F factor (146 aa).

Belongs to the anti-sigma-factor family.

It carries out the reaction L-seryl-[protein] + ATP = O-phospho-L-seryl-[protein] + ADP + H(+). It catalyses the reaction L-threonyl-[protein] + ATP = O-phospho-L-threonyl-[protein] + ADP + H(+). In terms of biological role, binds to sigma F and blocks its ability to form an RNA polymerase holoenzyme (E-sigma F). Phosphorylates SpoIIAA on a serine residue. This phosphorylation may enable SpoIIAA to act as an anti-anti-sigma factor that counteracts SpoIIAB and thus releases sigma F from inhibition. This is Anti-sigma F factor from Bacillus cytotoxicus (strain DSM 22905 / CIP 110041 / 391-98 / NVH 391-98).